The following is a 251-amino-acid chain: Probable caffeoyl-CoA O-methyltransferase 3 (251 aa).

S-adenosyl-L-methionine contacts are provided by residues Thr61, Asp83, 85 to 86, Ser91, Asp109, and Ala138; that span reads GV. Asp160 contacts a divalent metal cation. S-adenosyl-L-methionine is bound at residue Asp162. 2 residues coordinate a divalent metal cation: Asp186 and Asn187.

It belongs to the class I-like SAM-binding methyltransferase superfamily. Cation-dependent O-methyltransferase family. CCoAMT subfamily.

The catalysed reaction is (E)-caffeoyl-CoA + S-adenosyl-L-methionine = (E)-feruloyl-CoA + S-adenosyl-L-homocysteine + H(+). The sequence is that of Probable caffeoyl-CoA O-methyltransferase 3 (omt1) from Dictyostelium discoideum (Social amoeba).